Reading from the N-terminus, the 73-residue chain is Translation initiation factor IF-1 (73 aa).

The S1-like domain occupies Met1–Lys73.

It belongs to the IF-1 family. In terms of assembly, component of the 30S ribosomal translation pre-initiation complex which assembles on the 30S ribosome in the order IF-2 and IF-3, IF-1 and N-formylmethionyl-tRNA(fMet); mRNA recruitment can occur at any time during PIC assembly.

The protein resides in the cytoplasm. In terms of biological role, one of the essential components for the initiation of protein synthesis. Stabilizes the binding of IF-2 and IF-3 on the 30S subunit to which N-formylmethionyl-tRNA(fMet) subsequently binds. Helps modulate mRNA selection, yielding the 30S pre-initiation complex (PIC). Upon addition of the 50S ribosomal subunit IF-1, IF-2 and IF-3 are released leaving the mature 70S translation initiation complex. This chain is Translation initiation factor IF-1, found in Chloroflexus aurantiacus (strain ATCC 29366 / DSM 635 / J-10-fl).